Reading from the N-terminus, the 443-residue chain is Porin D (443 aa).

An N-terminal signal peptide occupies residues 1–23 (MKVMKWSAIALAVSAGSTQFAVA). Catalysis depends on residues H179, D231, and S319.

The protein belongs to the outer membrane porin (Opr) (TC 1.B.25) family.

It is found in the cell outer membrane. Functionally, porin with a specificity for basic amino acids. Involved in facilitated diffusion of carbapenem beta-lactam antibiotics, such as imipenem and meropenem. Also possesses serine protease activity. This Pseudomonas aeruginosa (strain ATCC 15692 / DSM 22644 / CIP 104116 / JCM 14847 / LMG 12228 / 1C / PRS 101 / PAO1) protein is Porin D (oprD).